The chain runs to 246 residues: Acetoacetate decarboxylase (246 aa).

Lys116 serves as the catalytic Schiff-base intermediate with acetoacetate.

The protein belongs to the ADC family.

The catalysed reaction is acetoacetate + H(+) = acetone + CO2. Catalyzes the conversion of acetoacetate to acetone and carbon dioxide. In Bordetella avium (strain 197N), this protein is Acetoacetate decarboxylase.